Reading from the N-terminus, the 339-residue chain is UDP-N-acetylglucosamine--N-acetylmuramyl-(pentapeptide) pyrophosphoryl-undecaprenol N-acetylglucosamine transferase (339 aa).

UDP-N-acetyl-alpha-D-glucosamine is bound by residues 11–13, Asn127, Arg170, Ser188, Ile235, and Gln280; that span reads TGG.

The protein belongs to the glycosyltransferase 28 family. MurG subfamily.

Its subcellular location is the cell inner membrane. The catalysed reaction is di-trans,octa-cis-undecaprenyl diphospho-N-acetyl-alpha-D-muramoyl-L-alanyl-D-glutamyl-meso-2,6-diaminopimeloyl-D-alanyl-D-alanine + UDP-N-acetyl-alpha-D-glucosamine = di-trans,octa-cis-undecaprenyl diphospho-[N-acetyl-alpha-D-glucosaminyl-(1-&gt;4)]-N-acetyl-alpha-D-muramoyl-L-alanyl-D-glutamyl-meso-2,6-diaminopimeloyl-D-alanyl-D-alanine + UDP + H(+). It participates in cell wall biogenesis; peptidoglycan biosynthesis. Cell wall formation. Catalyzes the transfer of a GlcNAc subunit on undecaprenyl-pyrophosphoryl-MurNAc-pentapeptide (lipid intermediate I) to form undecaprenyl-pyrophosphoryl-MurNAc-(pentapeptide)GlcNAc (lipid intermediate II). This chain is UDP-N-acetylglucosamine--N-acetylmuramyl-(pentapeptide) pyrophosphoryl-undecaprenol N-acetylglucosamine transferase, found in Thermotoga sp. (strain RQ2).